The primary structure comprises 685 residues: Transforming growth factor beta activator LRRC33 (685 aa).

A signal peptide spans 1–27 (MPVCGCLSVVLSHAVVLLMLVLHSASG). The Extracellular segment spans residues 28–640 (HPQTFPCRLI…CGFTNNNKES (613 aa)). In terms of domain architecture, LRRNT spans 29–56 (PQTFPCRLIQRVALCSGRQLSVIPDCLP). 7 LRR repeats span residues 57–79 (HETEEIFFDRNLLENLQDGLSRY), 80–102 (PFLRMFSCANNQLMTVAETAFIE), 103–129 (SHLLENLNLANNELHHGHKQVAQAFRS), 130–154 (LTQLKTLDLSGNGLSEDMVSVLVAN), 155–178 (LSSLESLYLSRNGMQRLDESTFRD), 180–201 (HQLKELNVERNLLFEISGAFDH), and 202–225 (MKKLQRLNLAFNCLPCLVNFEMTQ). N154 carries an N-linked (GlcNAc...) asparagine glycan. N-linked (GlcNAc...) asparagine glycosylation is found at N230 and N244. LRR repeat units lie at residues 248–271 (TFQLETLDLSDNHLLFFPFLPTNN) and 273–296 (IRTLLLSNNRVGFYQHLANSTSSN). 5 N-linked (GlcNAc...) asparagine glycosylation sites follow: N291, N296, N309, N312, and N325. 11 LRR repeats span residues 326-349 (LSSVEFLDLSENKVNYFPQGFIKQ), 351-373 (PQLYWLKLRSNCLQSFSLTSEDL), 374-397 (PVTIYELDVSRNRLTEIKASQTSK), 400-423 (LNNLTHLNLSTNDLQNFPPMIFTS), 425-447 (PNLNTLDLSHNTVDVCYSSNYMG), 457-480 (MASLKQLYLADCSIQNVPSSAFKG), 482-503 (SLTHLELSNNPNLHLKQQSLKG), 505-526 (ANTLQHLGIGNTGLQDFDFSPY), 527-549 (TNLKSLNISRNSLSKLPDSLMAL), 551-571 (LKLLDLRDNSLTTIKSEHASL), and 573-596 (AKKLQTVYMNGNAFNCCHLDWFRT). N402 and N407 each carry an N-linked (GlcNAc...) asparagine glycan. N533 carries an N-linked (GlcNAc...) asparagine glycan. Positions 597 to 635 (FGENKGIHVADLSEITCLDLNYRRHKVVLTDAVYCGFTN) constitute an LRRCT domain. A helical membrane pass occupies residues 641-661 (VVWYILLFVTVSVSIMGISVI). At 662 to 685 (YMLTFKPRMLPRVIKKKCWRPTSY) the chain is on the cytoplasmic side.

This sequence belongs to the LRRC32/LRRC33 family.

Its subcellular location is the cell membrane. It localises to the endoplasmic reticulum membrane. In terms of biological role, key regulator of transforming growth factor beta-1 (TGFB1) specifically required for microglia function in the nervous system. Required for activation of latent TGF-beta-1 in macrophages and microglia: associates specifically via disulfide bonds with the Latency-associated peptide (LAP), which is the regulatory chain of TGFB1, and regulates integrin-dependent activation of TGF-beta-1. TGF-beta-1 activation mediated by lrrc33/nrros is highly localized: there is little spreading of TGF-beta-1 activated from one microglial cell to neighboring microglia, suggesting the existence of localized and selective activation of TGF-beta-1 by lrrc33/nrros. This chain is Transforming growth factor beta activator LRRC33, found in Danio rerio (Zebrafish).